The following is a 204-amino-acid chain: Urease accessory protein UreG (204 aa).

12–19 (GPVGSGKT) lines the GTP pocket.

It belongs to the SIMIBI class G3E GTPase family. UreG subfamily. In terms of assembly, homodimer. UreD, UreF and UreG form a complex that acts as a GTP-hydrolysis-dependent molecular chaperone, activating the urease apoprotein by helping to assemble the nickel containing metallocenter of UreC. The UreE protein probably delivers the nickel.

The protein localises to the cytoplasm. Facilitates the functional incorporation of the urease nickel metallocenter. This process requires GTP hydrolysis, probably effectuated by UreG. The chain is Urease accessory protein UreG from Pseudomonas fluorescens (strain Pf0-1).